The sequence spans 61 residues: [Thr6]-bradykinyl-Val,Asp (61 aa).

The N-terminal stretch at 1–22 (MSFLKKSLFLVLFLGLVSFSIC) is a signal peptide. Residues 23–50 (EEEKRETEEEENEDEMDKESEEKRESPE) constitute a propeptide that is removed on maturation. The tract at residues 24–61 (EEKRETEEEENEDEMDKESEEKRESPERPPGFTPFRVD) is disordered. Over residues 30 to 41 (EEEENEDEMDKE) the composition is skewed to acidic residues. Pro-53 carries the 4-hydroxyproline; in form [Hyp3,Thr6]-bradykinyl-Val,Asp and [Hyp3,Thr6]-bradykinin modification.

Belongs to the frog skin active peptide (FSAP) family. Bradykinin-related peptide subfamily. Expressed by the skin glands.

Its subcellular location is the secreted. Its function is as follows. Induces relaxation of rat smooth muscle from tail artery (EC(50)=16.8 nM) and contraction of that from ileum (EC(50)=205 nM), urinary bladder (EC(50)=895 nM) and uterus (EC(50)=60.3 nM). Binds to both bradykinin receptor B1 (BDKRB1) and B2 (BDKRB2). In terms of biological role, [Hyp3,Thr6]-bradykinin: Induces relaxation of rat smooth muscle from tail artery (EC(50)=56.7 nM) and contraction of that from ileum (EC(50)=588 nM), urinary bladder (EC(50)=4.6 uM) and uterus (EC(50)=3.9 nM). Binds to both bradykinin receptor B1 (BDKRB1) and B2 (BDKRB2). In arterial smooth muscle, the effect via BDKRB1 is stronger, in uterus, ileum and urinary bladder that via BDKRB2. Functionally, induces relaxation of rat smooth muscle from tail artery (EC(50)=10.8 nM) and contraction of that from ileum (EC(50)=645 nM), urinary bladder (EC(50)=1.1 uM) and uterus (EC(50)=1.2 uM). Binds to both bradykinin receptor B1 (BDKRB1) and B2 (BDKRB2). Apart from uterus smooth muscle, the effect via B2 is stronger. [Hyp3,Thr6]-bradykinyl-Val,Asp: Induces relaxation of rat smooth muscle from tail artery (EC(50)=3.5 nM) and contraction of that from ileum (EC(50)=223 nM), urinary bladder (EC(50)=1.5 uM) and uterus (EC(50)=356 nM). Binds to both bradykinin receptor B1 (BDKRB1) and B2 (BDKRB2); the effects via B2 a stronger. The protein is [Thr6]-bradykinyl-Val,Asp of Agalychnis callidryas (Red-eyed tree frog).